Here is a 983-residue protein sequence, read N- to C-terminus: Probable serine/threonine-protein kinase mps1 (983 aa).

The segment covering 1–18 (MDTHQSFNENQHPNFNSG) has biased composition (polar residues). 5 disordered regions span residues 1–26 (MDTH…INMN), 252–430 (PQQQ…NNNY), 441–460 (NNDS…NSSV), 513–601 (QQQQ…QQQQ), and 654–691 (QQEQ…SEIV). The segment covering 253–278 (QQQQQQQQQPYEISSSSSLMSTPASS) has biased composition (low complexity). Over residues 279–301 (RHLSNRSSIVPTPNSSTKLSESI) the composition is skewed to polar residues. 2 stretches are compositionally biased toward low complexity: residues 319–329 (TTTNFNTTTTT) and 348–371 (NNNN…SYNK). Acidic residues predominate over residues 374-403 (NDEDDQDEEDEEEEDEDEDDDEEDEEEYED). Residues 380–430 (DEEDEEEEDEDEDDDEEDEEEYEDNNNNNNNNNNNNNNNNNNNNNNNNNNY) are a coiled coil. Over residues 404–429 (NNNNNNNNNNNNNNNNNNNNNNNNNN) the composition is skewed to low complexity. Residues 474-517 (KLDYENNVKLQQQQQQQQQQQQQQQQQQQQQQQQQYIQQQQQQQ) adopt a coiled-coil conformation. A compositionally biased stretch (low complexity) spans 529 to 563 (NNTPTTTTTTTAATNVQNPSSSSSYISPPLSSQSS). Residues 588–665 (SKLHQNNLQQ…EQQLKKTNMQ (78 aa)) adopt a coiled-coil conformation. The span at 673–683 (QPQTQTQQQQK) shows a compositional bias: low complexity. The Protein kinase domain maps to 714 to 981 (YLRIEFIGKG…IPTLLNHDFL (268 aa)). ATP contacts are provided by residues 720–728 (IGKGGSGKV) and Lys-742. Asp-838 (proton acceptor) is an active-site residue.

Belongs to the protein kinase superfamily. Ser/Thr protein kinase family.

It carries out the reaction L-seryl-[protein] + ATP = O-phospho-L-seryl-[protein] + ADP + H(+). The enzyme catalyses L-threonyl-[protein] + ATP = O-phospho-L-threonyl-[protein] + ADP + H(+). This chain is Probable serine/threonine-protein kinase mps1 (mps1), found in Dictyostelium discoideum (Social amoeba).